The following is a 328-amino-acid chain: Small ribosomal subunit protein bS1A (328 aa).

S1 motif domains lie at 31–100 (GDIV…LSIR), 118–182 (DATV…LSHR), and 196–264 (AQVV…LSTK). A disordered region spans residues 298 to 328 (EAQGIPYEPPTSVDDTDDEEDESLAVSAVDE). The span at 311-328 (DDTDDEEDESLAVSAVDE) shows a compositional bias: acidic residues.

This sequence belongs to the bacterial ribosomal protein bS1 family.

Binds mRNA. In Synechocystis sp. (strain ATCC 27184 / PCC 6803 / Kazusa), this protein is Small ribosomal subunit protein bS1A (rps1A).